The following is a 97-amino-acid chain: Nucleoid-associated protein Hac_0048 (97 aa).

This sequence belongs to the YbaB/EbfC family. In terms of assembly, homodimer.

The protein resides in the cytoplasm. It localises to the nucleoid. In terms of biological role, binds to DNA and alters its conformation. May be involved in regulation of gene expression, nucleoid organization and DNA protection. This Helicobacter acinonychis (strain Sheeba) protein is Nucleoid-associated protein Hac_0048.